The following is a 147-amino-acid chain: Hemoglobin subunit beta (147 aa).

Positions 3 to 147 (EWTDKERSII…VVSALGKQYH (145 aa)) constitute a Globin domain. Residues H64 and H93 each coordinate heme b.

The protein belongs to the globin family. Hb1 is a heterotetramer of two alpha chains and two beta chains. As to expression, red blood cells.

Functionally, involved in oxygen transport from gills to the various peripheral tissues. This chain is Hemoglobin subunit beta (hbb), found in Trematomus bernacchii (Emerald rockcod).